Consider the following 447-residue polypeptide: MLILRQLMDAYIRQKRASPGMVQASDLQMNRPMSGMRSNSRELHAYDGPMQFIGSPQNPDQILSNNSSSITMNSSRNNSNNMRSLSTINQEDLIEEISSHELEDEESSPVTVVEQPIAPQSANSAHSQRARIGQPSFNDTLDEEDYANRNISGVAAVRPAGIGSPYKEGAAMEGSNGAANGSGSVGGSGESEGDVIGQIDQFVMQPAPQGVLYKCRITRDRKGMDRGLFPIYYLHLERDYGKKIFLLGGRKRKKSKTSNYIVSCDPTDLSRNADGFCGKLRSNVFGTSFTVFDSGNKESTDSPRLDLAVIIYDTNILGFKGPRNMTVILPGMTEDDQRVKISSADPKQQGILDLWKMKNMDNIVELHNKTPVWNDETQSYVLNFHGRVTQASVKNFQLVHDSDPEYIVMQFGRTSEDVFTMDYRYPLCAMQAFAIALSSFDGKIACE.

A disordered region spans residues 54 to 84 (GSPQNPDQILSNNSSSITMNSSRNNSNNMRS). The segment covering 62–84 (ILSNNSSSITMNSSRNNSNNMRS) has biased composition (low complexity). S136 bears the Phosphoserine mark. The span at 168–182 (EGAAMEGSNGAANGS) shows a compositional bias: low complexity. Residues 168–191 (EGAAMEGSNGAANGSGSVGGSGES) form a disordered region.

This sequence belongs to the TUB family.

The protein resides in the cytoplasm. It is found in the nucleus. The protein localises to the cell projection. Its subcellular location is the cilium membrane. It localises to the rhabdomere. This chain is Protein king tubby, found in Drosophila grimshawi (Hawaiian fruit fly).